The following is a 377-amino-acid chain: Succinyl-diaminopimelate desuccinylase (377 aa).

Residue His-66 participates in Zn(2+) binding. Residue Asp-68 is part of the active site. Asp-99 lines the Zn(2+) pocket. Glu-133 (proton acceptor) is an active-site residue. Positions 134, 162, and 348 each coordinate Zn(2+).

Belongs to the peptidase M20A family. DapE subfamily. As to quaternary structure, homodimer. Zn(2+) serves as cofactor. The cofactor is Co(2+).

The enzyme catalyses N-succinyl-(2S,6S)-2,6-diaminopimelate + H2O = (2S,6S)-2,6-diaminopimelate + succinate. It participates in amino-acid biosynthesis; L-lysine biosynthesis via DAP pathway; LL-2,6-diaminopimelate from (S)-tetrahydrodipicolinate (succinylase route): step 3/3. Its function is as follows. Catalyzes the hydrolysis of N-succinyl-L,L-diaminopimelic acid (SDAP), forming succinate and LL-2,6-diaminopimelate (DAP), an intermediate involved in the bacterial biosynthesis of lysine and meso-diaminopimelic acid, an essential component of bacterial cell walls. This chain is Succinyl-diaminopimelate desuccinylase, found in Histophilus somni (strain 129Pt) (Haemophilus somnus).